Here is a 156-residue protein sequence, read N- to C-terminus: Putative pre-16S rRNA nuclease (156 aa).

The protein belongs to the YqgF nuclease family.

It is found in the cytoplasm. Functionally, could be a nuclease involved in processing of the 5'-end of pre-16S rRNA. This is Putative pre-16S rRNA nuclease from Phenylobacterium zucineum (strain HLK1).